A 225-amino-acid chain; its full sequence is MGIKDWPEGEGPRDKLLQKGAGQLSDAELLAVLLRNGLAGLNAVDLARSLISEFGGLRNLLCAPRNQVCRLPGVGPVKYAQLQAAAELARRVAQENLQRGQVLTNPDLTRDYLMRQLADRSYEVFAVLLLDSQHRVIQFVELFRGTIDSASVYPREVVSLVLEKKAAAVIVCHNHPSGNAEPSQADRRITERLKNALATIDVSLLDHMVVGDREIVSFAERGWIN.

In terms of domain architecture, MPN spans 102–224 (VLTNPDLTRD…IVSFAERGWI (123 aa)). Histidine 173, histidine 175, and aspartate 186 together coordinate Zn(2+). Residues 173–186 (HNHPSGNAEPSQAD) carry the JAMM motif motif.

This sequence belongs to the UPF0758 family.

This Shewanella baltica (strain OS185) protein is UPF0758 protein Shew185_0376.